The following is a 222-amino-acid chain: Cytidylate kinase 2 (222 aa).

Glycine 7–threonine 15 serves as a coordination point for ATP.

The protein belongs to the cytidylate kinase family. Type 1 subfamily.

Its subcellular location is the cytoplasm. It carries out the reaction CMP + ATP = CDP + ADP. The catalysed reaction is dCMP + ATP = dCDP + ADP. This chain is Cytidylate kinase 2, found in Haemophilus influenzae (strain ATCC 51907 / DSM 11121 / KW20 / Rd).